A 528-amino-acid polypeptide reads, in one-letter code: Calcium-dependent protein kinase 17 (528 aa).

A disordered region spans residues 1–65 (MGNCCSHGRD…GPIGPVLGRP (65 aa)). Residue Gly2 is the site of N-myristoyl glycine attachment. A compositionally biased stretch (low complexity) spans 20–45 (NGASASNAANSTGPTAEASVPQSKHA). Positions 73 to 331 (YSLGKELGRG…AAQVLNHPWI (259 aa)) constitute a Protein kinase domain. Residues 79–87 (LGRGQFGVT) and Lys102 contribute to the ATP site. Catalysis depends on Asp197, which acts as the Proton acceptor. Ser237 carries the post-translational modification Phosphoserine. An autoinhibitory domain region spans residues 337 to 367 (APDVPLDNAVMSRLKQFKAMNNFKKVALRVI). EF-hand domains are found at residues 374–409 (EEIM…QGTR), 410–445 (LSEY…INRL), 446–481 (DREE…FGMN), and 485–516 (DIKE…GNPD). Residues Asp387, Asp389, Ser391, Thr393, Glu398, Asp423, Asp425, Asn427, Thr429, Glu434, Asp459, Asp461, Ser463, Tyr465, Glu470, Asp494, Asp496, Asp498, Arg500, and Glu505 each contribute to the Ca(2+) site.

Belongs to the protein kinase superfamily. Ser/Thr protein kinase family. CDPK subfamily.

It localises to the membrane. The catalysed reaction is L-seryl-[protein] + ATP = O-phospho-L-seryl-[protein] + ADP + H(+). The enzyme catalyses L-threonyl-[protein] + ATP = O-phospho-L-threonyl-[protein] + ADP + H(+). Its activity is regulated as follows. Activated by calcium. Autophosphorylation may play an important role in the regulation of the kinase activity. May play a role in signal transduction pathways that involve calcium as a second messenger. The polypeptide is Calcium-dependent protein kinase 17 (CPK17) (Arabidopsis thaliana (Mouse-ear cress)).